A 282-amino-acid chain; its full sequence is Structure-specific endonuclease subunit slx1 (282 aa).

Residues 7–97 (GFYGVYLLFC…RLTHVPRKTK (91 aa)) enclose the GIY-YIG domain. Residues 191 to 243 (CRVCYERVQDKDDSLHCFHPGCTLTAHIMCLAKLFLLNEPQNLIPVEGLCPSC) form an SLX1-type zinc finger.

The protein belongs to the SLX1 family. Forms a heterodimer with slx4. Requires a divalent metal cation as cofactor.

The protein resides in the nucleus. Its function is as follows. Catalytic subunit of the slx1-slx4 structure-specific endonuclease that resolves DNA secondary structures generated during DNA repair and recombination. Has endonuclease activity towards branched DNA substrates, introducing single-strand cuts in duplex DNA close to junctions with ss-DNA. This Xenopus laevis (African clawed frog) protein is Structure-specific endonuclease subunit slx1 (slx1a).